The sequence spans 615 residues: MRNLAALLPALFLLGSSLLPAGTALAQPLHGISMHGTPELPADFRHFPYVNPDVKKGGRISYGVVGTFDSLNPFVLKGMRTTARGVWDPEFGNLLYESLMLRSSDEPFSLYGLLAETVEWDDERSFIQFNINPRAKWSDGKPVTPDDVIFTFSLLKEKGRPPFNSRLDGVAKMEKVGDRGVRFTFNDKANRETPLILASSTPILPKHAIDPEKFEQAGLGPVVGSGPYRIKTLRPGERIIWERNPDYWGKDIPGKVGFDNYDEISVTYFLQVTTMFEAFKKGDIDIYPEGDAINGTSDTSHWGQAYNFPAVHRGDIVKDVFQPRLPTGMFGLVFNTRRATFADEKVREGLSYALDFEWLNRNILGGSFKRTQSYWQNSPLGAYGNAADERELALLGDAAKTMPAELLAGTYAMPTTDGTGADRKVLKLAVDKLKEAGYSIKNGKMSDANGRQLAFEIMTQNPAQERIALAYQRSLNLIGVAMGIRSVDDGQYQARSNSFDYDMIIRSLPSSLSPGMEQLNRWNSLSRDAQGSFNYAGVANPDIDRMIEALLQARSTEDFQAAVRAYDRLLVAGHYIIPLYYIGAQWVARWKYIDRPDMTPISGNQKQTWWDARVQ.

Positions 1-26 (MRNLAALLPALFLLGSSLLPAGTALA) are cleaved as a signal peptide.

The protein belongs to the bacterial solute-binding protein 5 family. As to quaternary structure, the complex is composed of one ATP-binding protein (YejF), two transmembrane proteins (YejB and YejE) and a solute-binding protein (YepA).

The protein resides in the periplasm. Its function is as follows. Part of the ABC transporter complex YejBEF-YepA involved in the uptake of muropeptides, the breakdown products of cell wall peptidoglycan. The import of muropeptides into the cell enables peptidoglycan recycling, which is vital for cell wall integrity in this bacterium. Probably binds muropeptides. In Agrobacterium fabrum (strain C58 / ATCC 33970) (Agrobacterium tumefaciens (strain C58)), this protein is Peptidoglycan-binding protein YepA.